A 196-amino-acid chain; its full sequence is Nucleoid occlusion factor SlmA (196 aa).

In terms of domain architecture, HTH tetR-type spans 6–66 (RNRREEILQA…GLIEFVEDTL (61 aa)). The H-T-H motif DNA-binding region spans 29 to 48 (TTAKLAANLGVSEAALYRHF). The stretch at 108–135 (DALMGEHDRLRGRMEDLFNRIESSIKQI) forms a coiled coil.

The protein belongs to the nucleoid occlusion factor SlmA family. Homodimer. Interacts with FtsZ.

The protein localises to the cytoplasm. It localises to the nucleoid. Functionally, required for nucleoid occlusion (NO) phenomenon, which prevents Z-ring formation and cell division over the nucleoid. Acts as a DNA-associated cell division inhibitor that binds simultaneously chromosomal DNA and FtsZ, and disrupts the assembly of FtsZ polymers. SlmA-DNA-binding sequences (SBS) are dispersed on non-Ter regions of the chromosome, preventing FtsZ polymerization at these regions. This is Nucleoid occlusion factor SlmA from Idiomarina loihiensis (strain ATCC BAA-735 / DSM 15497 / L2-TR).